Reading from the N-terminus, the 335-residue chain is Tryptophan--tRNA ligase (335 aa).

Residues 19 to 21 (QPS) and 28 to 29 (GN) each bind ATP. The 'HIGH' region motif lies at 20 to 29 (PSSGMLHLGN). D143 contributes to the L-tryptophan binding site. Residues 155 to 157 (GAD), I192, and 201 to 205 (KMSKS) contribute to the ATP site. The 'KMSKS' region signature appears at 201–205 (KMSKS).

It belongs to the class-I aminoacyl-tRNA synthetase family. Homodimer.

It is found in the cytoplasm. It carries out the reaction tRNA(Trp) + L-tryptophan + ATP = L-tryptophyl-tRNA(Trp) + AMP + diphosphate + H(+). Its function is as follows. Catalyzes the attachment of tryptophan to tRNA(Trp). The polypeptide is Tryptophan--tRNA ligase (Tropheryma whipplei (strain TW08/27) (Whipple's bacillus)).